The primary structure comprises 278 residues: Large ribosomal subunit protein uL2 (278 aa).

The tract at residues 208–278 (AGRSRWMGKR…LIIRHRKGRK (71 aa)) is disordered. A compositionally biased stretch (basic residues) spans 209–219 (GRSRWMGKRPQ). Over residues 258–270 (KTRDSKKASEKLI) the composition is skewed to basic and acidic residues.

This sequence belongs to the universal ribosomal protein uL2 family. As to quaternary structure, part of the 50S ribosomal subunit. Forms a bridge to the 30S subunit in the 70S ribosome.

Its function is as follows. One of the primary rRNA binding proteins. Required for association of the 30S and 50S subunits to form the 70S ribosome, for tRNA binding and peptide bond formation. It has been suggested to have peptidyltransferase activity; this is somewhat controversial. Makes several contacts with the 16S rRNA in the 70S ribosome. The sequence is that of Large ribosomal subunit protein uL2 from Lactobacillus delbrueckii subsp. bulgaricus (strain ATCC 11842 / DSM 20081 / BCRC 10696 / JCM 1002 / NBRC 13953 / NCIMB 11778 / NCTC 12712 / WDCM 00102 / Lb 14).